A 101-amino-acid polypeptide reads, in one-letter code: uncharacterized protein (101 aa).

2 helical membrane passes run 10 to 30 (VLAI…IGSI) and 67 to 87 (IILG…ILSI).

Its subcellular location is the membrane. This is an uncharacterized protein from Acanthamoeba polyphaga (Amoeba).